The chain runs to 342 residues: Holliday junction branch migration complex subunit RuvB (342 aa).

The large ATPase domain (RuvB-L) stretch occupies residues 1–184; the sequence is MEENFDIREQ…FGINLHLEYY (184 aa). ATP is bound by residues Leu-23, Arg-24, Gly-65, Lys-68, Thr-69, Thr-70, 131 to 133, Arg-174, Tyr-184, and Arg-221; that span reads EDY. Thr-69 contacts Mg(2+). Positions 185 to 255 are small ATPAse domain (RuvB-S); that stretch reads DDDVLTSIIR…IARFALEALN (71 aa). The tract at residues 258–342 is head domain (RuvB-H); sequence RYGLDEIDNK…YNSQKTLFDD (85 aa). Residues Arg-313 and Arg-318 each contribute to the DNA site.

The protein belongs to the RuvB family. In terms of assembly, homohexamer. Forms an RuvA(8)-RuvB(12)-Holliday junction (HJ) complex. HJ DNA is sandwiched between 2 RuvA tetramers; dsDNA enters through RuvA and exits via RuvB. An RuvB hexamer assembles on each DNA strand where it exits the tetramer. Each RuvB hexamer is contacted by two RuvA subunits (via domain III) on 2 adjacent RuvB subunits; this complex drives branch migration. In the full resolvosome a probable DNA-RuvA(4)-RuvB(12)-RuvC(2) complex forms which resolves the HJ.

It is found in the cytoplasm. It carries out the reaction ATP + H2O = ADP + phosphate + H(+). Functionally, the RuvA-RuvB-RuvC complex processes Holliday junction (HJ) DNA during genetic recombination and DNA repair, while the RuvA-RuvB complex plays an important role in the rescue of blocked DNA replication forks via replication fork reversal (RFR). RuvA specifically binds to HJ cruciform DNA, conferring on it an open structure. The RuvB hexamer acts as an ATP-dependent pump, pulling dsDNA into and through the RuvAB complex. RuvB forms 2 homohexamers on either side of HJ DNA bound by 1 or 2 RuvA tetramers; 4 subunits per hexamer contact DNA at a time. Coordinated motions by a converter formed by DNA-disengaged RuvB subunits stimulates ATP hydrolysis and nucleotide exchange. Immobilization of the converter enables RuvB to convert the ATP-contained energy into a lever motion, pulling 2 nucleotides of DNA out of the RuvA tetramer per ATP hydrolyzed, thus driving DNA branch migration. The RuvB motors rotate together with the DNA substrate, which together with the progressing nucleotide cycle form the mechanistic basis for DNA recombination by continuous HJ branch migration. Branch migration allows RuvC to scan DNA until it finds its consensus sequence, where it cleaves and resolves cruciform DNA. In Phocaeicola vulgatus (strain ATCC 8482 / DSM 1447 / JCM 5826 / CCUG 4940 / NBRC 14291 / NCTC 11154) (Bacteroides vulgatus), this protein is Holliday junction branch migration complex subunit RuvB.